The sequence spans 417 residues: Serine hydroxymethyltransferase (417 aa).

Residues Leu121 and 125–127 (GHL) contribute to the (6S)-5,6,7,8-tetrahydrofolate site. N6-(pyridoxal phosphate)lysine is present on Lys229. A (6S)-5,6,7,8-tetrahydrofolate-binding site is contributed by 355 to 357 (SPF).

This sequence belongs to the SHMT family. In terms of assembly, homodimer. Pyridoxal 5'-phosphate is required as a cofactor.

It is found in the cytoplasm. The catalysed reaction is (6R)-5,10-methylene-5,6,7,8-tetrahydrofolate + glycine + H2O = (6S)-5,6,7,8-tetrahydrofolate + L-serine. It functions in the pathway one-carbon metabolism; tetrahydrofolate interconversion. Its pathway is amino-acid biosynthesis; glycine biosynthesis; glycine from L-serine: step 1/1. Functionally, catalyzes the reversible interconversion of serine and glycine with tetrahydrofolate (THF) serving as the one-carbon carrier. This reaction serves as the major source of one-carbon groups required for the biosynthesis of purines, thymidylate, methionine, and other important biomolecules. Also exhibits THF-independent aldolase activity toward beta-hydroxyamino acids, producing glycine and aldehydes, via a retro-aldol mechanism. The protein is Serine hydroxymethyltransferase of Shewanella baltica (strain OS195).